Here is a 618-residue protein sequence, read N- to C-terminus: DELLA protein SLN1 (618 aa).

The disordered stretch occupies residues 1-36 (MKREYQDGGGSGGGGDEMGSSRDKMMVSSSEAGEGE). The segment covering 7 to 17 (DGGGSGGGGDE) has biased composition (gly residues). Positions 39-43 (DELLA) match the DELLA motif motif. 2 disordered regions span residues 106 to 137 (LNAPPPPLPPAPPQLNASTSSTVTGGGGYFDL) and 159 to 197 (APADLSADSVRDPKRMRTGGSSTSSSSSSSSSLGGGAAR). Over residues 108–118 (APPPPLPPAPP) the composition is skewed to pro residues. Composition is skewed to low complexity over residues 119-128 (QLNASTSSTV) and 176-197 (TGGSSTSSSSSSSSSLGGGAAR). One can recognise a GRAS domain in the interval 221 to 614 (VDTQEAGIRL…RPLIATSAWR (394 aa)). The segment at 228-284 (IRLVHALLACAEAVQQENLSAAEALVKQIPLLAASQGGAMRKVAAYFGEALARRVFR) is leucine repeat I (LRI). The LxCxE motif signature appears at 235-239 (LACAE). Positions 303 to 368 (HAHFYESCPY…GGPPSFRLTG (66 aa)) are VHIID. The VHIID motif lies at 334-338 (VHVVD). A leucine repeat II (LRII) region spans residues 382–421 (QVGWKLAQFAHTIRVDFQYRGLVAATLADLEPFMLQPEGE). Positions 431-535 (IAVNSVFEMH…EVYLGRQICN (105 aa)) are PFYRE. Residues 538 to 614 (ACEGTERTER…RPLIATSAWR (77 aa)) form an SAW region.

This sequence belongs to the GRAS family. DELLA subfamily. Post-translationally, phosphorylated. Ubiquitinated. Upon GA application it is ubiquitinated, leading to its subsequent degradation. In terms of tissue distribution, apparently restricted to regions where growth is occurring in the leaf blade. Localizes almost exclusively to the basal elongation zone (EZ) for the elongating blades of L1, L2 and L3. More detailed fractionation of the L3 blade shows that in cv. Himalaya, it is preferentially localized to the basal third of the EZ, but its presence can still be detected toward the end of the EZ (at protein level).

Its subcellular location is the nucleus. Its function is as follows. Probable transcriptional regulator that acts as a repressor of the gibberellin (GA) signaling pathway. Probably acts by participating in large multiprotein complexes that repress transcription of GA-inducible genes. Upon GA application, it is degraded by the proteasome, allowing the GA signaling pathway. Acts as a negative regulator of GAMYB gene expression. The chain is DELLA protein SLN1 (SLN1) from Hordeum vulgare (Barley).